Here is a 107-residue protein sequence, read N- to C-terminus: Thiosulfate sulfurtransferase GlpE (107 aa).

In terms of domain architecture, Rhodanese spans 19 to 107 (QDLNAVLVDI…WHKAGLPVEK (89 aa)). Residue Cys67 is the Cysteine persulfide intermediate of the active site.

The protein belongs to the GlpE family.

It is found in the cytoplasm. The enzyme catalyses thiosulfate + hydrogen cyanide = thiocyanate + sulfite + 2 H(+). It catalyses the reaction thiosulfate + [thioredoxin]-dithiol = [thioredoxin]-disulfide + hydrogen sulfide + sulfite + 2 H(+). Its function is as follows. Transferase that catalyzes the transfer of sulfur from thiosulfate to thiophilic acceptors such as cyanide or dithiols. May function in a CysM-independent thiosulfate assimilation pathway by catalyzing the conversion of thiosulfate to sulfite, which can then be used for L-cysteine biosynthesis. In Aliivibrio fischeri (strain MJ11) (Vibrio fischeri), this protein is Thiosulfate sulfurtransferase GlpE.